A 69-amino-acid chain; its full sequence is Large ribosomal subunit protein bL28 (69 aa).

It belongs to the bacterial ribosomal protein bL28 family.

The protein is Large ribosomal subunit protein bL28 of Desulfovibrio desulfuricans (strain ATCC 27774 / DSM 6949 / MB).